We begin with the raw amino-acid sequence, 764 residues long: Polyribonucleotide nucleotidyltransferase (764 aa).

The Mg(2+) site is built by aspartate 541 and aspartate 547. One can recognise a KH domain in the interval proline 607 to isoleucine 666. The S1 motif domain occupies glycine 678 to valine 747.

Belongs to the polyribonucleotide nucleotidyltransferase family. The cofactor is Mg(2+).

It localises to the cytoplasm. It catalyses the reaction RNA(n+1) + phosphate = RNA(n) + a ribonucleoside 5'-diphosphate. Its function is as follows. Involved in mRNA degradation. Catalyzes the phosphorolysis of single-stranded polyribonucleotides processively in the 3'- to 5'-direction. The protein is Polyribonucleotide nucleotidyltransferase of Nocardia farcinica (strain IFM 10152).